A 110-amino-acid polypeptide reads, in one-letter code: UPF0060 membrane protein Mfla_2554 (110 aa).

The next 4 membrane-spanning stretches (helical) occupy residues 7–27, 33–53, 61–81, and 83–103; these read VALF…PYLW, SPLL…LLTL, VYAA…WVVD, and IIPS…MAII.

The protein belongs to the UPF0060 family.

Its subcellular location is the cell inner membrane. The sequence is that of UPF0060 membrane protein Mfla_2554 from Methylobacillus flagellatus (strain ATCC 51484 / DSM 6875 / VKM B-1610 / KT).